We begin with the raw amino-acid sequence, 595 residues long: Leiomodin-1 (595 aa).

Disordered stretches follow at residues 1 to 69 (MSKV…EAML), 81 to 322 (QREM…KVKN), and 467 to 568 (DKQR…QEKN). Serine 12 is modified (phosphoserine). The span at 27-40 (EEMEELEKELDVVD) shows a compositional bias: acidic residues. 8 stretches are compositionally biased toward basic and acidic residues: residues 81–110 (QREMSVDESKQVGRKTDAKNGEEKDSDASR), 117–127 (QDSDLGKEPKK), 134–192 (FSRD…EKTG), 200–223 (SRDKDKKKEEVKEPSKKEEVKLTA), 230–249 (GRREDGRLKESSKENKKPED), 257–287 (RDWRKEDEKVKKEENQPDKEVREESKTKAPE), 467–476 (DKQRQKRLQE), and 484–493 (SGEKKDRLEV). Serine 85 bears the Phosphoserine mark. Serine 135 is subject to Phosphoserine. 8 tandem repeats follow at residues 165–179 (AAVDRKESGKDGREE), 180–195 (RAAAARKEEEKTGSVK), 196–211 (NAGLSRDKDKKKEEVK), 212–226 (EPSKKEEVKLTAESR), 227–240 (NTVGRREDGRLKES), 242–255 (KENKKPEDEGIGSG), 256–271 (GRDWRKEDEKVKKEEN), and 272–288 (QPDKEVREESKTKAPEK). An 8 X approximate tandem repeats region spans residues 165–288 (AAVDRKESGK…EESKTKAPEK (124 aa)). Residues 503–522 (SPKPSPQPSPKPAPKNSPKK) are 5 X 4 AA approximate tandem repeats. Composition is skewed to pro residues over residues 505–517 (KPSPQPSPKPAPK) and 527–538 (AAPPPPPPPLAP). Serine 550 carries the phosphoserine modification. One can recognise a WH2 domain in the interval 569 to 588 (SRDQLLAAIRSSNLKQLKKV).

It belongs to the tropomodulin family. Detected in aorta, urinary bladder and uterus (at protein level). Detected in smooth muscle cells. Detected in aorta, bladder, colon, intestine, stomach and uterus.

It localises to the cytoplasm. The protein resides in the myofibril. Its subcellular location is the sarcomere. The protein localises to the cytoskeleton. Functionally, required for proper contractility of visceral smooth muscle cells. Mediates nucleation of actin filaments. The sequence is that of Leiomodin-1 (Lmod1) from Mus musculus (Mouse).